The primary structure comprises 426 residues: Tyrosine--tRNA ligase (426 aa).

Tyr-38 lines the L-tyrosine pocket. The 'HIGH' region motif lies at 43–52 (PTADSLHIGS). The L-tyrosine site is built by Tyr-176 and Gln-180. The short motif at 236-240 (KFGKT) is the 'KMSKS' region element. Lys-239 is an ATP binding site. The 68-residue stretch at 359–426 (QTIVEVLTQS…KKLFNLYIWK (68 aa)) folds into the S4 RNA-binding domain.

Belongs to the class-I aminoacyl-tRNA synthetase family. TyrS type 1 subfamily. In terms of assembly, homodimer.

It localises to the cytoplasm. The enzyme catalyses tRNA(Tyr) + L-tyrosine + ATP = L-tyrosyl-tRNA(Tyr) + AMP + diphosphate + H(+). In terms of biological role, catalyzes the attachment of tyrosine to tRNA(Tyr) in a two-step reaction: tyrosine is first activated by ATP to form Tyr-AMP and then transferred to the acceptor end of tRNA(Tyr). The sequence is that of Tyrosine--tRNA ligase from Aliivibrio fischeri (strain ATCC 700601 / ES114) (Vibrio fischeri).